Here is a 968-residue protein sequence, read N- to C-terminus: RNA polymerase-associated protein RapA (968 aa).

The Helicase ATP-binding domain occupies 164 to 334; sequence DVGRRHAPRV…FARLRLLDPN (171 aa). 177–184 serves as a coordination point for ATP; sequence DEVGLGKT. Residues 280-283 carry the DEAH box motif; the sequence is DEAH. The Helicase C-terminal domain maps to 490 to 662; the sequence is RVEWLMGYLT…YLASPDQTEG (173 aa).

Belongs to the SNF2/RAD54 helicase family. RapA subfamily. Interacts with the RNAP. Has a higher affinity for the core RNAP than for the holoenzyme. Its ATPase activity is stimulated by binding to RNAP.

Its function is as follows. Transcription regulator that activates transcription by stimulating RNA polymerase (RNAP) recycling in case of stress conditions such as supercoiled DNA or high salt concentrations. Probably acts by releasing the RNAP, when it is trapped or immobilized on tightly supercoiled DNA. Does not activate transcription on linear DNA. Probably not involved in DNA repair. The chain is RNA polymerase-associated protein RapA from Shigella boydii serotype 4 (strain Sb227).